Reading from the N-terminus, the 669-residue chain is Dymeclin (669 aa).

A lipid anchor (N-myristoyl glycine) is attached at Gly-2.

The protein belongs to the dymeclin family. In terms of processing, myristoylated in vitro; myristoylation is not essential for protein targeting to Golgi compartment.

The protein resides in the cytoplasm. It is found in the golgi apparatus. In terms of biological role, necessary for correct organization of Golgi apparatus. The polypeptide is Dymeclin (DYM) (Gallus gallus (Chicken)).